The following is a 416-amino-acid chain: D-amino acid dehydrogenase (416 aa).

3–17 (VIVLGAGIVGVTSAY) is a binding site for FAD.

Belongs to the DadA oxidoreductase family. It depends on FAD as a cofactor.

It carries out the reaction a D-alpha-amino acid + A + H2O = a 2-oxocarboxylate + AH2 + NH4(+). The protein operates within amino-acid degradation; D-alanine degradation; NH(3) and pyruvate from D-alanine: step 1/1. In terms of biological role, oxidative deamination of D-amino acids. The sequence is that of D-amino acid dehydrogenase from Rhizobium johnstonii (strain DSM 114642 / LMG 32736 / 3841) (Rhizobium leguminosarum bv. viciae).